A 1637-amino-acid chain; its full sequence is Serine/threonine-protein kinase Genghis Khan (1637 aa).

The Protein kinase domain maps to 100–369; that stretch reads FDILKIIGRG…IQDFMDHPWF (270 aa). ATP contacts are provided by residues 106-114 and Lys-129; that span reads IGRGAFGEV. The active-site Proton acceptor is Asp-224. The 71-residue stretch at 370-440 folds into the AGC-kinase C-terminal domain; that stretch reads VGIDWKNIRQ…SLTSSSTLDS (71 aa). Coiled coils occupy residues 473 to 587, 643 to 688, and 839 to 881; these read VDSV…EDAV, SEKL…LKYT, and DELS…DLQK. The segment at 538 to 575 is disordered; sequence RNQKQKLSRQVRDKEEELDGAMQKNDSLRNELRKSDKT. A compositionally biased stretch (basic and acidic residues) spans 563–575; the sequence is DSLRNELRKSDKT. Residue Thr-895 is modified to Phosphothreonine. The disordered stretch occupies residues 952 to 971; the sequence is NNKDHSSMKEASVSDLSREE. A Phorbol-ester/DAG-type zinc finger spans residues 989 to 1039; it reads IHQFLVRTFSSPTKCNHCTSLMVGLTRQGVVCEICGFACHTICCQKVPTTC. The PH domain occupies 1059–1177; the sequence is GTAYEGYVKV…WVIALGELHR (119 aa). Positions 1203-1489 constitute a CNH domain; that stretch reads IRNALCSVII…LPLNNLGNVV (287 aa). The CRIB domain maps to 1546–1559; sequence ISAPTNFNHISHMG. Residue Ser-1584 is modified to Phosphoserine. Positions 1611–1637 are disordered; sequence DYGNDNIISRTPSPMASSFMDGLSNND. Over residues 1616–1626 the composition is skewed to polar residues; it reads NIISRTPSPMA.

It belongs to the protein kinase superfamily. AGC Ser/Thr protein kinase family. DMPK subfamily. Interacts tightly with GTP-bound but not GDP-bound Cdc42.

It carries out the reaction L-seryl-[protein] + ATP = O-phospho-L-seryl-[protein] + ADP + H(+). The enzyme catalyses L-threonyl-[protein] + ATP = O-phospho-L-threonyl-[protein] + ADP + H(+). In terms of biological role, acts as a downstream effector for the regulation of actin polymerization by Cdc42. The sequence is that of Serine/threonine-protein kinase Genghis Khan (gek) from Drosophila melanogaster (Fruit fly).